We begin with the raw amino-acid sequence, 334 residues long: DNA polymerase III subunit delta' (334 aa).

The DNA polymerase III holoenzyme complex contains at least 10 different subunits organized into 3 functionally essential subassemblies: the Pol III core, the beta sliding clamp processivity factor and the clamp-loading complex. The Pol III core (subunits alpha, epsilon and theta) contains the polymerase and the 3'-5' exonuclease proofreading activities. The polymerase is tethered to the template via the dimeric beta sliding clamp processivity factor. The clamp-loading complex (also called gamma complex) assembles the beta sliding clamp onto the primed template and plays a central role in the organization and communication at the replication fork. The clamp-loading complex contains delta, delta', psi and chi, and 3 copies of either or both of two different DnaX proteins, gamma and tau. The DNA replisome complex has a single clamp loader (3 tau and 1 each of delta, delta', psi and chi subunits) which binds 3 Pol III cores (1 core on the leading strand and 2 on the lagging strand) each with a beta sliding clamp dimer. Additional proteins in the replisome are other copies of gamma, psi and chi, Ssb, DNA helicase and RNA primase. The clamp loader hydrolyzes ATP to assemble the beta processivity factor onto the primed template and plays a central role in the organization and communication at the replication fork; the minimal complex to load the beta sliding clamp on DNA is delta, delta', gamma.

The enzyme catalyses DNA(n) + a 2'-deoxyribonucleoside 5'-triphosphate = DNA(n+1) + diphosphate. Functionally, part of the beta sliding clamp loading complex, which hydrolyzes ATP to load the beta clamp onto primed DNA to form the DNA replication pre-initiation complex. DNA polymerase III is a complex, multichain enzyme responsible for most of the replicative synthesis in bacteria. This DNA polymerase also exhibits 3' to 5' exonuclease activity. The gamma complex (gamma(3),delta,delta') is thought to load beta dimers onto DNA by binding ATP which alters the complex's conformation so it can bind beta sliding clamp dimers and open them at one interface. Primed DNA is recognized, ATP is hydrolyzed releasing the gamma complex and closing the beta sliding clamp ring around the primed DNA. The protein is DNA polymerase III subunit delta' (holB) of Escherichia coli (strain K12).